Here is a 147-residue protein sequence, read N- to C-terminus: Endoribonuclease YbeY (147 aa).

3 residues coordinate Zn(2+): His-109, His-113, and His-119.

It belongs to the endoribonuclease YbeY family. Zn(2+) is required as a cofactor.

It is found in the cytoplasm. Functionally, single strand-specific metallo-endoribonuclease involved in late-stage 70S ribosome quality control and in maturation of the 3' terminus of the 16S rRNA. The chain is Endoribonuclease YbeY from Magnetococcus marinus (strain ATCC BAA-1437 / JCM 17883 / MC-1).